The sequence spans 1199 residues: DNA-directed RNA polymerase subunit beta' (1199 aa).

The Zn(2+) site is built by Cys60, Cys62, Cys75, and Cys78. The Mg(2+) site is built by Asp449, Asp451, and Asp453. The Zn(2+) site is built by Cys818, Cys892, Cys899, and Cys902.

The protein belongs to the RNA polymerase beta' chain family. The RNAP catalytic core consists of 2 alpha, 1 beta, 1 beta' and 1 omega subunit. When a sigma factor is associated with the core the holoenzyme is formed, which can initiate transcription. Mg(2+) serves as cofactor. It depends on Zn(2+) as a cofactor.

It catalyses the reaction RNA(n) + a ribonucleoside 5'-triphosphate = RNA(n+1) + diphosphate. Its function is as follows. DNA-dependent RNA polymerase catalyzes the transcription of DNA into RNA using the four ribonucleoside triphosphates as substrates. In Exiguobacterium sibiricum (strain DSM 17290 / CCUG 55495 / CIP 109462 / JCM 13490 / 255-15), this protein is DNA-directed RNA polymerase subunit beta'.